Here is a 130-residue protein sequence, read N- to C-terminus: Glycine cleavage system H protein (130 aa).

The Lipoyl-binding domain maps to 22-103 (KAYIGISDCA…PYGSWIAAIE (82 aa)). An N6-lipoyllysine modification is found at Lys-63.

Belongs to the GcvH family. As to quaternary structure, the glycine cleavage system is composed of four proteins: P, T, L and H. It depends on (R)-lipoate as a cofactor.

In terms of biological role, the glycine cleavage system catalyzes the degradation of glycine. The H protein shuttles the methylamine group of glycine from the P protein to the T protein. This is Glycine cleavage system H protein from Clostridium botulinum (strain Okra / Type B1).